Here is a 471-residue protein sequence, read N- to C-terminus: PTS system mannitol-specific EIICB component (471 aa).

At 1-29 (MTHTSENQAGFRVKIQRFGSYLSGMIMPN) the chain is on the cytoplasmic side. In terms of domain architecture, PTS EIIC type-2 spans 18–342 (FGSYLSGMIM…FFVASIFLKS (325 aa)). Residues 30 to 51 (IGAFIAWGIITALFIPTGWLPN) traverse the membrane as a helical segment. At 52–55 (ETFA) the chain is on the extracellular side. A helical transmembrane segment spans residues 56-76 (KLVGPMITYLLPLLIGYTGGK). Residues 77–139 (MIYDVRGGVV…QGFEMLVNNF (63 aa)) lie on the Cytoplasmic side of the membrane. Residues 140–161 (SAGIIGGLLTLAAFKGVGPVVS) form a helical membrane-spanning segment. Topologically, residues 162 to 170 (AISKTLAAG) are extracellular. The chain crosses the membrane as a helical span at residues 171–191 (VEKIVDLHLLPLANIFIEPGK). Residues 192–278 (VLFLNNAINH…VLMRPILILA (87 aa)) are Cytoplasmic-facing. Residues 279-298 (AIAGGVSGVLTFTIFDAGLV) traverse the membrane as a helical segment. Over 299–318 (AVPSPGSIFALLAMTPKGNY) the chain is Extracellular. A helical transmembrane segment spans residues 319 to 340 (LGVLAGVLVATAVSFFVASIFL). The Cytoplasmic segment spans residues 341-471 (KSAKNNEEDI…YDELIEMLKK (131 aa)). A PTS EIIB type-2 domain is found at 383–471 (KKIVFACDAG…YDELIEMLKK (89 aa)). Residue cysteine 389 is the Phosphocysteine intermediate; for EIIB activity of the active site. Cysteine 389 carries the phosphocysteine; by EIIA modification.

In terms of assembly, homodimer.

The protein localises to the cell membrane. It catalyses the reaction D-mannitol(out) + N(pros)-phospho-L-histidyl-[protein] = D-mannitol 1-phosphate(in) + L-histidyl-[protein]. Functionally, the phosphoenolpyruvate-dependent sugar phosphotransferase system (sugar PTS), a major carbohydrate active transport system, catalyzes the phosphorylation of incoming sugar substrates concomitantly with their translocation across the cell membrane. The enzyme II CmtAB PTS system is involved in D-mannitol transport. This Geobacillus stearothermophilus (Bacillus stearothermophilus) protein is PTS system mannitol-specific EIICB component.